The primary structure comprises 146 residues: Dihydroneopterin aldolase 1 (146 aa).

Residues Glu41, Tyr73, and 92 to 93 (LE) contribute to the substrate site. The active-site Proton donor/acceptor is the Lys119.

Belongs to the DHNA family. As to quaternary structure, homooctamer. Forms a hollow cylinder assembled from two ring-shaped tetramers. In terms of tissue distribution, expressed in roots, leaves, stems and siliques.

The enzyme catalyses 7,8-dihydroneopterin = 6-hydroxymethyl-7,8-dihydropterin + glycolaldehyde. It functions in the pathway cofactor biosynthesis; tetrahydrofolate biosynthesis; 2-amino-4-hydroxy-6-hydroxymethyl-7,8-dihydropteridine diphosphate from 7,8-dihydroneopterin triphosphate: step 3/4. Its function is as follows. Catalyzes the conversion of 7,8-dihydroneopterin into 6-hydroxymethyl-7,8-dihydropterin, a biosynthetic precursor of the vitamin tetrahydrofolate. Can use L-threo-dihydroneopterin and D-erythro-dihydroneopterin as substrates for the formation of 6-hydroxymethyldihydropterin, but it can also catalyze the epimerization of carbon 2' of dihydroneopterin and dihydromonapterin. This is Dihydroneopterin aldolase 1 from Arabidopsis thaliana (Mouse-ear cress).